Reading from the N-terminus, the 294-residue chain is MSNLKEIKRKIKSVYNTQKTTNAMKLVSTAKLKKAEEAAKRSKIYAQKIDEILSEISVQINKIVHNEDDVRLFLFHKKEQIKTVDLIFITADKGLCGGFNIKTLKTVSEMLKEYEAKNINIRLRAIGKTGIEYFNFQKIELLEKYFHLSSSPDYEKACEVIHAAVDDFLNGNTDEVILVHNGYKNMITQELKINHLIPVEPKSIEQTHNSLLELEPEGTELLEDLIKTYFEYNMYYALIDSLAAEHSARMQAMDNATNNAKARVKQLNLAYNKARQESITTELIEIISGVESMK.

This sequence belongs to the ATPase gamma chain family. As to quaternary structure, F-type ATPases have 2 components, CF(1) - the catalytic core - and CF(0) - the membrane proton channel. CF(1) has five subunits: alpha(3), beta(3), gamma(1), delta(1), epsilon(1). CF(0) has three main subunits: a, b and c.

It localises to the cell inner membrane. Produces ATP from ADP in the presence of a proton gradient across the membrane. The gamma chain is believed to be important in regulating ATPase activity and the flow of protons through the CF(0) complex. This is ATP synthase gamma chain from Campylobacter jejuni subsp. jejuni serotype O:23/36 (strain 81-176).